A 181-amino-acid polypeptide reads, in one-letter code: Putative poly [ADP-ribose] polymerase-like 100L (181 aa).

The PARP catalytic domain occupies 1-181 (MDNLKEEETN…KIKYIIHITK (181 aa)).

The enzyme catalyses NAD(+) + (ADP-D-ribosyl)n-acceptor = nicotinamide + (ADP-D-ribosyl)n+1-acceptor + H(+).. This Invertebrate iridescent virus 6 (IIV-6) protein is Putative poly [ADP-ribose] polymerase-like 100L.